Reading from the N-terminus, the 1160-residue chain is Nck-associated protein 1 homolog (1160 aa).

Belongs to the HEM-1/HEM-2 family. As to quaternary structure, part of a Scar/WAVE complex containing brk1, scrA, abiA, pirA and napA.

In terms of biological role, involved in regulation of actin and microtubule organization. Involved in cell adhesion. The polypeptide is Nck-associated protein 1 homolog (napA) (Dictyostelium discoideum (Social amoeba)).